A 496-amino-acid chain; its full sequence is Glutamyl-tRNA(Gln) amidotransferase subunit A (496 aa).

Residues Lys-75 and Ser-150 each act as charge relay system in the active site. The active-site Acyl-ester intermediate is the Ser-174.

Belongs to the amidase family. GatA subfamily. Heterotrimer of A, B and C subunits.

The catalysed reaction is L-glutamyl-tRNA(Gln) + L-glutamine + ATP + H2O = L-glutaminyl-tRNA(Gln) + L-glutamate + ADP + phosphate + H(+). In terms of biological role, allows the formation of correctly charged Gln-tRNA(Gln) through the transamidation of misacylated Glu-tRNA(Gln) in organisms which lack glutaminyl-tRNA synthetase. The reaction takes place in the presence of glutamine and ATP through an activated gamma-phospho-Glu-tRNA(Gln). The protein is Glutamyl-tRNA(Gln) amidotransferase subunit A of Burkholderia thailandensis (strain ATCC 700388 / DSM 13276 / CCUG 48851 / CIP 106301 / E264).